Consider the following 41-residue polypeptide: Urotensin-1 (41 aa).

V41 is subject to Valine amide.

The protein belongs to the sauvagine/corticotropin-releasing factor/urotensin I family.

Its subcellular location is the secreted. Urotensin is found in the teleost caudal neurosecretory system. It has a suggested role in osmoregulation and as a corticotropin-releasing factor. The polypeptide is Urotensin-1 (Catostomus commersonii (White sucker)).